A 308-amino-acid polypeptide reads, in one-letter code: Porphobilinogen deaminase (308 aa).

C241 is subject to S-(dipyrrolylmethanemethyl)cysteine.

It belongs to the HMBS family. In terms of assembly, monomer. Dipyrromethane is required as a cofactor.

The enzyme catalyses 4 porphobilinogen + H2O = hydroxymethylbilane + 4 NH4(+). The protein operates within porphyrin-containing compound metabolism; protoporphyrin-IX biosynthesis; coproporphyrinogen-III from 5-aminolevulinate: step 2/4. Its function is as follows. Tetrapolymerization of the monopyrrole PBG into the hydroxymethylbilane pre-uroporphyrinogen in several discrete steps. The protein is Porphobilinogen deaminase of Staphylococcus epidermidis (strain ATCC 35984 / DSM 28319 / BCRC 17069 / CCUG 31568 / BM 3577 / RP62A).